A 269-amino-acid chain; its full sequence is NAD-capped RNA hydrolase NudC (269 aa).

Arginine 81 contacts substrate. Cysteine 110, cysteine 113, cysteine 128, and cysteine 131 together coordinate Zn(2+). Tyrosine 136 contributes to the substrate binding site. A Nudix hydrolase domain is found at 137-260 (PRIFPCIIVA…TIARALIEQT (124 aa)). Residues alanine 170, glutamate 186, and glutamate 190 each contribute to the a divalent metal cation site. The Nudix box signature appears at 171–192 (GFVEVGETLEQCVAREVLEETG). 204–211 (QPWAFPSS) lines the substrate pocket. Glutamate 231 contributes to the a divalent metal cation binding site. Alanine 253 is a substrate binding site.

The protein belongs to the Nudix hydrolase family. NudC subfamily. In terms of assembly, homodimer. Mg(2+) is required as a cofactor. It depends on Mn(2+) as a cofactor. Requires Zn(2+) as cofactor.

It catalyses the reaction a 5'-end NAD(+)-phospho-ribonucleoside in mRNA + H2O = a 5'-end phospho-adenosine-phospho-ribonucleoside in mRNA + beta-nicotinamide D-ribonucleotide + 2 H(+). It carries out the reaction NAD(+) + H2O = beta-nicotinamide D-ribonucleotide + AMP + 2 H(+). The catalysed reaction is NADH + H2O = reduced beta-nicotinamide D-ribonucleotide + AMP + 2 H(+). Functionally, mRNA decapping enzyme that specifically removes the nicotinamide adenine dinucleotide (NAD) cap from a subset of mRNAs by hydrolyzing the diphosphate linkage to produce nicotinamide mononucleotide (NMN) and 5' monophosphate mRNA. The NAD-cap is present at the 5'-end of some mRNAs and stabilizes RNA against 5'-processing. Has preference for mRNAs with a 5'-end purine. Catalyzes the hydrolysis of a broad range of dinucleotide pyrophosphates. The protein is NAD-capped RNA hydrolase NudC of Vibrio cholerae serotype O1 (strain ATCC 39315 / El Tor Inaba N16961).